The chain runs to 750 residues: uncharacterized protein (750 aa).

Transmembrane regions (helical) follow at residues phenylalanine 2 to isoleucine 22, serine 33 to isoleucine 53, leucine 79 to leucine 99, leucine 116 to leucine 136, and isoleucine 143 to alanine 163. Disordered regions lie at residues aspartate 385–glutamate 461 and asparagine 571–alanine 651. The span at glutamate 398 to aspartate 411 shows a compositional bias: basic and acidic residues. Residues threonine 412 to aspartate 424 show a composition bias toward polar residues. Low complexity predominate over residues glutamine 425–threonine 436. Positions alanine 437–asparagine 451 are enriched in polar residues. Positions asparagine 452 to glutamate 461 are enriched in basic and acidic residues. Over residues aspartate 618–threonine 629 the composition is skewed to polar residues. Residues alanine 724–phenylalanine 744 form a helical membrane-spanning segment.

This sequence to M.pneumoniae MPN_335.

Its subcellular location is the cell membrane. This is an uncharacterized protein from Mycoplasma pneumoniae (strain ATCC 29342 / M129 / Subtype 1) (Mycoplasmoides pneumoniae).